The chain runs to 217 residues: Thiamine-phosphate synthase (217 aa).

4-amino-2-methyl-5-(diphosphooxymethyl)pyrimidine is bound by residues 42 to 46 (QFRDK) and aspartate 77. Positions 78 and 97 each coordinate Mg(2+). 4-amino-2-methyl-5-(diphosphooxymethyl)pyrimidine is bound at residue serine 117. Position 144–146 (144–146 (TIS)) interacts with 2-[(2R,5Z)-2-carboxy-4-methylthiazol-5(2H)-ylidene]ethyl phosphate. Lysine 147 serves as a coordination point for 4-amino-2-methyl-5-(diphosphooxymethyl)pyrimidine. 2-[(2R,5Z)-2-carboxy-4-methylthiazol-5(2H)-ylidene]ethyl phosphate-binding positions include glycine 175 and 195 to 196 (IT).

This sequence belongs to the thiamine-phosphate synthase family. Requires Mg(2+) as cofactor.

The catalysed reaction is 2-[(2R,5Z)-2-carboxy-4-methylthiazol-5(2H)-ylidene]ethyl phosphate + 4-amino-2-methyl-5-(diphosphooxymethyl)pyrimidine + 2 H(+) = thiamine phosphate + CO2 + diphosphate. It carries out the reaction 2-(2-carboxy-4-methylthiazol-5-yl)ethyl phosphate + 4-amino-2-methyl-5-(diphosphooxymethyl)pyrimidine + 2 H(+) = thiamine phosphate + CO2 + diphosphate. It catalyses the reaction 4-methyl-5-(2-phosphooxyethyl)-thiazole + 4-amino-2-methyl-5-(diphosphooxymethyl)pyrimidine + H(+) = thiamine phosphate + diphosphate. It participates in cofactor biosynthesis; thiamine diphosphate biosynthesis; thiamine phosphate from 4-amino-2-methyl-5-diphosphomethylpyrimidine and 4-methyl-5-(2-phosphoethyl)-thiazole: step 1/1. Functionally, condenses 4-methyl-5-(beta-hydroxyethyl)thiazole monophosphate (THZ-P) and 2-methyl-4-amino-5-hydroxymethyl pyrimidine pyrophosphate (HMP-PP) to form thiamine monophosphate (TMP). The chain is Thiamine-phosphate synthase from Levilactobacillus brevis (strain ATCC 367 / BCRC 12310 / CIP 105137 / JCM 1170 / LMG 11437 / NCIMB 947 / NCTC 947) (Lactobacillus brevis).